A 443-amino-acid polypeptide reads, in one-letter code: 3-phosphoshikimate 1-carboxyvinyltransferase (443 aa).

3-phosphoshikimate contacts are provided by Lys-24, Ser-25, and Arg-29. Lys-24 contributes to the phosphoenolpyruvate binding site. Phosphoenolpyruvate contacts are provided by Gly-95 and Arg-123. Positions 167, 169, 323, and 350 each coordinate 3-phosphoshikimate. Gln-169 contacts phosphoenolpyruvate. Residue Asp-323 is the Proton acceptor of the active site. Arg-354 and Arg-398 together coordinate phosphoenolpyruvate.

The protein belongs to the EPSP synthase family. As to quaternary structure, monomer.

The protein localises to the cytoplasm. The catalysed reaction is 3-phosphoshikimate + phosphoenolpyruvate = 5-O-(1-carboxyvinyl)-3-phosphoshikimate + phosphate. It participates in metabolic intermediate biosynthesis; chorismate biosynthesis; chorismate from D-erythrose 4-phosphate and phosphoenolpyruvate: step 6/7. In terms of biological role, catalyzes the transfer of the enolpyruvyl moiety of phosphoenolpyruvate (PEP) to the 5-hydroxyl of shikimate-3-phosphate (S3P) to produce enolpyruvyl shikimate-3-phosphate and inorganic phosphate. This chain is 3-phosphoshikimate 1-carboxyvinyltransferase, found in Caulobacter vibrioides (strain ATCC 19089 / CIP 103742 / CB 15) (Caulobacter crescentus).